We begin with the raw amino-acid sequence, 574 residues long: K(+)/H(+) antiporter NhaP2 (574 aa).

A run of 13 helical transmembrane segments spans residues 6–26 (INSF…LSPM), 34–54 (ILLI…GGIL), 58–78 (YSTA…DGGM), 87–107 (VALW…TSIT), 109–129 (VMAA…GAIV), 173–193 (IAIL…ISFI), 196–216 (FGLG…LVNV), 219–239 (LAEG…YATS), 242–262 (LGGS…NKPT), 271–291 (VLDG…GLLL), 299–319 (IWLP…PLAV), 335–355 (WFIS…VFPM), and 359–379 (LPGA…SLLV). The RCK C-terminal domain occupies 405 to 486 (SGVEIYPKSE…LEALSNLFSQ (82 aa)).

This sequence belongs to the monovalent cation:proton antiporter 1 (CPA1) transporter (TC 2.A.36) family. NhaP2 subfamily.

It localises to the cell inner membrane. The catalysed reaction is K(+)(in) + H(+)(out) = K(+)(out) + H(+)(in). Its function is as follows. K(+)/H(+) antiporter that extrudes potassium in exchange for external protons and maintains the internal concentration of potassium under toxic levels. In Shewanella oneidensis (strain ATCC 700550 / JCM 31522 / CIP 106686 / LMG 19005 / NCIMB 14063 / MR-1), this protein is K(+)/H(+) antiporter NhaP2.